Here is a 275-residue protein sequence, read N- to C-terminus: Elongation factor Ts (275 aa).

Positions 76–79 are involved in Mg(2+) ion dislocation from EF-Tu; sequence TDFV.

The protein belongs to the EF-Ts family.

It localises to the cytoplasm. In terms of biological role, associates with the EF-Tu.GDP complex and induces the exchange of GDP to GTP. It remains bound to the aminoacyl-tRNA.EF-Tu.GTP complex up to the GTP hydrolysis stage on the ribosome. The protein is Elongation factor Ts of Corynebacterium glutamicum (strain ATCC 13032 / DSM 20300 / JCM 1318 / BCRC 11384 / CCUG 27702 / LMG 3730 / NBRC 12168 / NCIMB 10025 / NRRL B-2784 / 534).